The chain runs to 334 residues: Large ribosomal subunit protein uL3 (334 aa).

Over residues 1 to 10 (MGMKKSRPRR) the composition is skewed to basic residues. The tract at residues 1 to 20 (MGMKKSRPRRGSLAFSPRKR) is disordered.

It belongs to the universal ribosomal protein uL3 family. In terms of assembly, part of the 50S ribosomal subunit. Forms a cluster with proteins L14 and L24e.

In terms of biological role, one of the primary rRNA binding proteins, it binds directly near the 3'-end of the 23S rRNA, where it nucleates assembly of the 50S subunit. This chain is Large ribosomal subunit protein uL3, found in Methanococcus maripaludis (strain C7 / ATCC BAA-1331).